Here is a 737-residue protein sequence, read N- to C-terminus: Phosphoribosylformylglycinamidine synthase subunit PurL (737 aa).

H48 is an active-site residue. 2 residues coordinate ATP: Y51 and K90. E92 lines the Mg(2+) pocket. Residues 93 to 96 (SHNH) and R115 each bind substrate. H94 serves as the catalytic Proton acceptor. D116 contributes to the Mg(2+) binding site. A substrate-binding site is contributed by Q244. Residue D272 coordinates Mg(2+). Position 316–318 (316–318 (ESQ)) interacts with substrate. D500 and G537 together coordinate ATP. Mg(2+) is bound at residue N538. A substrate-binding site is contributed by S540.

This sequence belongs to the FGAMS family. In terms of assembly, monomer. Part of the FGAM synthase complex composed of 1 PurL, 1 PurQ and 2 PurS subunits.

The protein resides in the cytoplasm. It catalyses the reaction N(2)-formyl-N(1)-(5-phospho-beta-D-ribosyl)glycinamide + L-glutamine + ATP + H2O = 2-formamido-N(1)-(5-O-phospho-beta-D-ribosyl)acetamidine + L-glutamate + ADP + phosphate + H(+). It participates in purine metabolism; IMP biosynthesis via de novo pathway; 5-amino-1-(5-phospho-D-ribosyl)imidazole from N(2)-formyl-N(1)-(5-phospho-D-ribosyl)glycinamide: step 1/2. Part of the phosphoribosylformylglycinamidine synthase complex involved in the purines biosynthetic pathway. Catalyzes the ATP-dependent conversion of formylglycinamide ribonucleotide (FGAR) and glutamine to yield formylglycinamidine ribonucleotide (FGAM) and glutamate. The FGAM synthase complex is composed of three subunits. PurQ produces an ammonia molecule by converting glutamine to glutamate. PurL transfers the ammonia molecule to FGAR to form FGAM in an ATP-dependent manner. PurS interacts with PurQ and PurL and is thought to assist in the transfer of the ammonia molecule from PurQ to PurL. The polypeptide is Phosphoribosylformylglycinamidine synthase subunit PurL (Sulfurimonas denitrificans (strain ATCC 33889 / DSM 1251) (Thiomicrospira denitrificans (strain ATCC 33889 / DSM 1251))).